We begin with the raw amino-acid sequence, 156 residues long: Ribosomal RNA large subunit methyltransferase H (156 aa).

S-adenosyl-L-methionine-binding positions include Leu-73, Gly-104, and 123-128; that span reads LSALTL.

It belongs to the RNA methyltransferase RlmH family. Homodimer.

The protein resides in the cytoplasm. It carries out the reaction pseudouridine(1915) in 23S rRNA + S-adenosyl-L-methionine = N(3)-methylpseudouridine(1915) in 23S rRNA + S-adenosyl-L-homocysteine + H(+). Specifically methylates the pseudouridine at position 1915 (m3Psi1915) in 23S rRNA. The chain is Ribosomal RNA large subunit methyltransferase H from Shewanella loihica (strain ATCC BAA-1088 / PV-4).